A 414-amino-acid chain; its full sequence is Enterobactin exporter EntS (414 aa).

Residues 1–21 (MNRQSWLLNLSLLKTHPAFRA) lie on the Cytoplasmic side of the membrane. The chain crosses the membrane as a helical span at residues 22–42 (VFLARFISIVSLGLLGVAVPV). Residues 43–55 (QIQMMTHSTWQVG) lie on the Periplasmic side of the membrane. Residues 56–76 (LSVTLTGGAMFIGLMVGGVLA) form a helical membrane-spanning segment. Over 77–83 (DRYERKK) the chain is Cytoplasmic. Residues 84-104 (VILLARGTCGIGFIGLCVNAL) traverse the membrane as a helical segment. The Periplasmic portion of the chain corresponds to 105 to 109 (LPEPS). The helical transmembrane segment at 110–130 (LLAIYLLGLWDGFFASLGVTA) threads the bilayer. Topologically, residues 131–156 (LLAATPALVGRENLMQAGAITMLTVR) are cytoplasmic. The chain crosses the membrane as a helical span at residues 157–177 (LGSVISPMLGGILLASGGVAW). Residue Asn178 is a topological domain, periplasmic. Residues 179–199 (YGLAAAGTFITLLPLLTLPRL) form a helical membrane-spanning segment. The Cytoplasmic portion of the chain corresponds to 200-218 (PVPPQPRENPFLALLAAFR). The chain crosses the membrane as a helical span at residues 219–239 (FLLACPLIGGIALLGGLVTMA). Over 240–256 (SAVRVLYPALAMSWQMS) the chain is Periplasmic. The helical transmembrane segment at 257–277 (AAQIGLLYAAIPLGAAIGALT) threads the bilayer. Topologically, residues 278-287 (SGQLAHSVRP) are cytoplasmic. A helical membrane pass occupies residues 288–307 (GLIMLVSTVGSFLAVGLFAI). Residues 308–313 (MPVWIA) are Periplasmic-facing. A helical transmembrane segment spans residues 314–336 (GVICLALFGWLSAISSLLQYTLL). Residues 337–356 (QTQTPENMLGRMNGLWTAQN) lie on the Cytoplasmic side of the membrane. The helical transmembrane segment at 357–377 (VTGDAIGAALLGGLGAMMTPV) threads the bilayer. Position 378 (Ala378) is a topological domain, periplasmic. Residues 379 to 399 (SASVSGFGLVIIGLLLLLVLG) form a helical membrane-spanning segment. Over 400–414 (ELRRFRQTSPVSDAG) the chain is Cytoplasmic.

This sequence belongs to the major facilitator superfamily. EntS (TC 2.A.1.38) family.

Its subcellular location is the cell inner membrane. Component of an export pathway for enterobactin. This Salmonella paratyphi A (strain ATCC 9150 / SARB42) protein is Enterobactin exporter EntS.